A 409-amino-acid polypeptide reads, in one-letter code: uncharacterized protein (409 aa).

The N-terminal stretch at 1–39 is a signal peptide; sequence MVSDSKLELPLPVNQQKPRRRRILKVHLLIAALILSAVG. Zn(2+) is bound by residues His67, Asp69, Glu181, His250, and His271.

It belongs to the metallo-dependent hydrolases superfamily. Peptidase M19 family. As to quaternary structure, interacts with dil1. The cofactor is Zn(2+).

The enzyme catalyses an L-aminoacyl-L-amino acid + H2O = 2 an L-alpha-amino acid. This is an uncharacterized protein from Schizosaccharomyces pombe (strain 972 / ATCC 24843) (Fission yeast).